The sequence spans 765 residues: Eukaryotic translation initiation factor 3 subunit B (765 aa).

A sufficient for interaction with HCR1 and TIF32 region spans residues 1 to 136 (MKNFLPRTLK…LFVECGSMND (136 aa)). Residues 28 to 261 (RNTQLKRSKI…GVTAWGGPNF (234 aa)) form a sufficient for interaction with PIC8 region. At S61 the chain carries Phosphoserine. Y67 carries the post-translational modification Phosphotyrosine. In terms of domain architecture, RRM spans 77–162 (QYIVVNGAPV…HRLFLYTMKD (86 aa)). A Phosphoserine modification is found at S671.

The protein belongs to the eIF-3 subunit B family. In terms of assembly, component of the eukaryotic translation initiation factor 3 (eIF-3) complex.

The protein resides in the cytoplasm. Its function is as follows. RNA-binding component of the eukaryotic translation initiation factor 3 (eIF-3) complex, which is involved in protein synthesis of a specialized repertoire of mRNAs and, together with other initiation factors, stimulates binding of mRNA and methionyl-tRNAi to the 40S ribosome. The eIF-3 complex specifically targets and initiates translation of a subset of mRNAs involved in cell proliferation. The protein is Eukaryotic translation initiation factor 3 subunit B of Saccharomyces cerevisiae (strain YJM789) (Baker's yeast).